We begin with the raw amino-acid sequence, 445 residues long: MAAVTDNQQSGDNNGLVSLAQRSTTVAVQKSDSSGSQGQGTTDNKFQKYLNTTQALHQMGVIVPSLETWPGKPSTGIATRAAGGVSVQAATRQSTSTNEDLSNVITQLYHTSTSQLAYLNGQIVVMGSDRVPSLWYWVVDERTTSGRATWWAHTELNWGTDKQKQFVENQLGFKDDSNSDSKNSNLKAQGLTQPAYLIAGLDVVADHLVFAAFKAGAVGYDMTTDSNASTKDQVLAWSTTAGLDSDGGYKALVENTAGLNGPINGLFILLDTFAYVTPVSGMKGGSKNTEAVQTKYPVKDDSKASAKIASLINASPLNSYGDDGVTVFDALGLNFNFKLDEARLPSRTDQLLVYGIVNESELKSARENAQSTSDDNSNTKVKWTNTASHYLPVPYYYSANFPEAGNRRRAEQRNGVITIKKAIYPEVRGRQLQNIFDDWKTNKSR.

A disordered region spans residues 23 to 44 (STTVAVQKSDSSGSQGQGTTDN). Residues 31 to 43 (SDSSGSQGQGTTD) are compositionally biased toward low complexity.

This sequence belongs to the MgpC family.

The protein is Putative MgpC-like protein MPN_464 of Mycoplasma pneumoniae (strain ATCC 29342 / M129 / Subtype 1) (Mycoplasmoides pneumoniae).